Consider the following 283-residue polypeptide: N-terminal Xaa-Pro-Lys N-methyltransferase 2 (283 aa).

S-adenosyl-L-methionine is bound by residues Gly124, Arg129, Asp146, 174–175 (LQ), and Gln190.

It belongs to the methyltransferase superfamily. NTM1 family.

The protein localises to the nucleus. It catalyses the reaction N-terminal L-alanyl-L-prolyl-L-lysyl-[protein] + S-adenosyl-L-methionine = N-terminal N-methyl-L-alanyl-L-prolyl-L-lysyl-[protein] + S-adenosyl-L-homocysteine + H(+). The catalysed reaction is N-terminal L-prolyl-L-prolyl-L-lysyl-[protein] + S-adenosyl-L-methionine = N-terminal N-methyl-L-prolyl-L-prolyl-L-lysyl-[protein] + S-adenosyl-L-homocysteine + H(+). The enzyme catalyses N-terminal L-seryl-L-prolyl-L-lysyl-[protein] + S-adenosyl-L-methionine = N-terminal N-methyl-L-seryl-L-prolyl-L-lysyl-[protein] + S-adenosyl-L-homocysteine + H(+). Functionally, alpha N-methyltransferase that methylates the N-terminus of target proteins containing the N-terminal motif [Ala/Pro/Ser]-Pro-Lys when the initiator Met is cleaved. Specifically catalyzes monomethylation of exposed alpha-amino group of Ala or Ser residue in the [Ala/Ser]-Pro-Lys motif and Pro in the Pro-Pro-Lys motif. Predominantly functions as a mono-methyltransferase but is also able to di-/tri-methylate the GPKRIA peptide and di-methylate the PPKRIA peptide (in vitro). May activate NTMT1 by priming its substrates for trimethylation. This chain is N-terminal Xaa-Pro-Lys N-methyltransferase 2 (Ntmt2), found in Mus musculus (Mouse).